We begin with the raw amino-acid sequence, 103 residues long: Large ribosomal subunit protein bL21 (103 aa).

Belongs to the bacterial ribosomal protein bL21 family. Part of the 50S ribosomal subunit. Contacts protein L20.

Its function is as follows. This protein binds to 23S rRNA in the presence of protein L20. In Aromatoleum aromaticum (strain DSM 19018 / LMG 30748 / EbN1) (Azoarcus sp. (strain EbN1)), this protein is Large ribosomal subunit protein bL21.